A 283-amino-acid polypeptide reads, in one-letter code: Protein FAM170B (283 aa).

The segment covering 1-11 (MKCYFTDHRGE) has biased composition (basic and acidic residues). Disordered regions lie at residues 1–58 (MKCY…REEG) and 246–283 (AQGQ…QEKQ).

It belongs to the FAM170 family. Interacts with GOPC. Exclusively expressed in adult testis.

The protein resides in the cytoplasmic vesicle. The protein localises to the secretory vesicle. Its subcellular location is the acrosome. It is found in the acrosome outer membrane. Plays a role in fertilization through the acrosome reaction. This is Protein FAM170B from Homo sapiens (Human).